The following is a 61-amino-acid chain: Small ribosomal subunit protein uS14B (61 aa).

4 residues coordinate Zn(2+): Cys24, Cys27, Cys40, and Cys43.

The protein belongs to the universal ribosomal protein uS14 family. Zinc-binding uS14 subfamily. Part of the 30S ribosomal subunit. Contacts proteins S3 and S10. Zn(2+) is required as a cofactor.

Functionally, binds 16S rRNA, required for the assembly of 30S particles and may also be responsible for determining the conformation of the 16S rRNA at the A site. This is Small ribosomal subunit protein uS14B from Bacillus licheniformis (strain ATCC 14580 / DSM 13 / JCM 2505 / CCUG 7422 / NBRC 12200 / NCIMB 9375 / NCTC 10341 / NRRL NRS-1264 / Gibson 46).